The following is a 458-amino-acid chain: MKKDFNEFKEFIVGKKVGVVGIGVSNIPLINFLIDLGAAVTAFDKKNLEELGDVADGFNKKGVKLELGEKYLDNLKGFDVIFKTPSMRIDSEALVRARKEGAYVTSEMEEFVRYTRGKVYGITGSDGKTTTTTIISKLLEGQGYKTWVGGNIGTPLFSEIENIHDEDKVVLELSSFQLMTMTQEIDVAVCTNLSPNHLDMHKSMQEYIDAKKNIFIYQNSNGLLVVNRENEITHGFIKEAKGNVKEFSSKRELIDGAYYKNGILYLEDKEVCKKDDIVIKGMHNVENYLAAFLATKDDVSVEVMKKVAETFAGVEHRCELVREIDGVKYYNDSIASSPTRTLAGLRAFDEKVIVIAGGYDKNIPFEPLAYEGYPYIKELILMGATKHKIKDVFDNLENEKGIKININMVESLEEAVRLAESIANQGDIVTLSPACASFDMYPNFMIRGNKFKEIVKSL.

Residue 124–130 participates in ATP binding; it reads GSDGKTT.

This sequence belongs to the MurCDEF family.

The protein resides in the cytoplasm. It catalyses the reaction UDP-N-acetyl-alpha-D-muramoyl-L-alanine + D-glutamate + ATP = UDP-N-acetyl-alpha-D-muramoyl-L-alanyl-D-glutamate + ADP + phosphate + H(+). It functions in the pathway cell wall biogenesis; peptidoglycan biosynthesis. Functionally, cell wall formation. Catalyzes the addition of glutamate to the nucleotide precursor UDP-N-acetylmuramoyl-L-alanine (UMA). The protein is UDP-N-acetylmuramoylalanine--D-glutamate ligase of Clostridium beijerinckii (strain ATCC 51743 / NCIMB 8052) (Clostridium acetobutylicum).